A 279-amino-acid chain; its full sequence is Tryptophan synthase alpha chain (279 aa).

Catalysis depends on proton acceptor residues Glu50 and Asp61.

This sequence belongs to the TrpA family. Tetramer of two alpha and two beta chains.

The enzyme catalyses (1S,2R)-1-C-(indol-3-yl)glycerol 3-phosphate + L-serine = D-glyceraldehyde 3-phosphate + L-tryptophan + H2O. Its pathway is amino-acid biosynthesis; L-tryptophan biosynthesis; L-tryptophan from chorismate: step 5/5. Functionally, the alpha subunit is responsible for the aldol cleavage of indoleglycerol phosphate to indole and glyceraldehyde 3-phosphate. This is Tryptophan synthase alpha chain from Methylobacterium radiotolerans (strain ATCC 27329 / DSM 1819 / JCM 2831 / NBRC 15690 / NCIMB 10815 / 0-1).